Here is a 291-residue protein sequence, read N- to C-terminus: T-cell leukemia homeobox protein 3 (291 aa).

A disordered region spans residues 1–51; it reads MEAPASAQTPHPHEPISFGIDQILNSPDQDSAPAPRGPDGASYLGGPPGGR. Positions 166 to 225 form a DNA-binding region, homeobox; sequence RKKPRTSFSRVQICELEKRFHRQKYLASAERAALAKSLKMTDAQVKTWFQNRRTKWRRQT.

The protein localises to the nucleus. This is T-cell leukemia homeobox protein 3 (Tlx3) from Mus musculus (Mouse).